Reading from the N-terminus, the 735-residue chain is Transcription factor sphG (735 aa).

The zn(2)-C6 fungal-type DNA-binding region spans 13 to 40; sequence CDQCRARKIRCSREKPSCRNCGRLGLQC. Positions 89-110 are disordered; it reads TISPSARCPASPASPSPRLSDK. Positions 91–106 are enriched in low complexity; the sequence is SPSARCPASPASPSPR.

The protein localises to the nucleus. Functionally, transcription factor that regulates the expression of the gene cluster that mediates the biosynthesis of sphingofungins, bioactive molecules acting as sphingolipid inhibitors via inhibiting serine palmitoyl transferase (SPT). This chain is Transcription factor sphG, found in Aspergillus fumigatus (strain CBS 144.89 / FGSC A1163 / CEA10) (Neosartorya fumigata).